Reading from the N-terminus, the 288-residue chain is Polyketide biosynthesis malonyl CoA-acyl carrier protein transacylase PksC (288 aa).

Catalysis depends on residues Ser87 and His193.

It belongs to the FabD family.

Its subcellular location is the cytoplasm. The catalysed reaction is holo-[ACP] + malonyl-CoA = malonyl-[ACP] + CoA. It participates in antibiotic biosynthesis; bacillaene biosynthesis. Involved in some intermediate steps for the synthesis of the antibiotic polyketide bacillaene which is involved in secondary metabolism. It catalyzes the transfer of the malonyl-CoA group to the acyl-carrier-protein AcpK (Mal-AcpK). This Bacillus subtilis (strain 168) protein is Polyketide biosynthesis malonyl CoA-acyl carrier protein transacylase PksC (pksC).